The following is a 496-amino-acid chain: Fizzy-related protein homolog (496 aa).

3 disordered regions span residues 28 to 51, 64 to 88, and 105 to 166; these read RRTL…FIPS, INEN…GKDG, and EKVQ…SPRK. At Thr-32 the chain carries Phosphothreonine. Polar residues predominate over residues 32-42; sequence TPASSPVSSPS. Ser-36 carries the phosphoserine modification. The involved in APC/FZR1 E3 ubiquitin-protein ligase complex activity stretch occupies residues 47 to 52; that stretch reads RFIPSR. The residue at position 69 (Lys-69) is an N6-acetyllysine. 2 stretches are compositionally biased toward basic and acidic residues: residues 76–86 and 106–126; these read KAKDATSDNGK and KVQD…EKKG. A phosphoserine mark is found at Ser-133, Ser-138, Ser-146, and Ser-151. Over residues 146–160 the composition is skewed to polar residues; it reads SPYSLSPVSNKSQKL. An N6-acetyllysine modification is found at Lys-159. WD repeat units lie at residues 182–222, 227–266, 269–306, 311–350, 353–395, 397–438, and 441–480; these read PELQ…VTRL, VEGD…KLSM, GHTA…LQSE, GHRQ…PVQQ, EHLA…PLQC, DTGS…QVAK, and GHSY…RSTK.

This sequence belongs to the WD repeat CDC20/Fizzy family. As to quaternary structure, the unphosphorylated form interacts with APC/C during mitosis. Interacts with NINL. Interacts (in complex with the anaphase promoting complex APC) with MAD2L2; inhibits FZR1-mediated APC/C activation. Interacts with SIRT2 and USP37. Interacts (via WD repeats) with MAK. Interacts with RBBP8/CtIP; this interaction leads to RBBP8 proteasomal degradation. Interacts with HECW2. Interacts with SASS6; the interaction is regulated by CENATAC and leads to SASS6 proteasomal degradation. Interacts (via N-terminus) with CCNF. Interacts with CDC6. Interacts with TK1 (via the KEN box). In terms of processing, acetylated. Deacetylated by SIRT2 at Lys-69 and Lys-159; deacetylation enhances the interaction of FZR1 with CDC27, leading to activation of anaphase promoting complex/cyclosome (APC/C). Post-translationally, following DNA damage, it is dephosphorylated by CDC14B in G2 phase, leading to its reassociation with the APC/C, and allowing an efficient G2 DNA damage checkpoint. Phosphorylated by MAK. Ubiquitinated by the SCF(CCNF) E3 ubiquitin-protein ligase complex; leading to its degradation by the proteasome. Isoform 2 is expressed at high levels in heart, liver, spleen and some cancer cell lines whereas isoform 3 is expressed only at low levels in these tissues.

It localises to the nucleus. Its subcellular location is the cytoplasm. It functions in the pathway protein modification; protein ubiquitination. Its function is as follows. Substrate-specific adapter for the anaphase promoting complex/cyclosome (APC/C) E3 ubiquitin-protein ligase complex. Associates with the APC/C in late mitosis, in replacement of CDC20, and activates the APC/C during anaphase and telophase. The APC/C remains active in degrading substrates to ensure that positive regulators of the cell cycle do not accumulate prematurely. At the G1/S transition FZR1 is phosphorylated, leading to its dissociation from the APC/C. Following DNA damage, it is required for the G2 DNA damage checkpoint: its dephosphorylation and reassociation with the APC/C leads to the ubiquitination of PLK1, preventing entry into mitosis. Acts as an adapter for APC/C to target the DNA-end resection factor RBBP8/CtIP for ubiquitination and subsequent proteasomal degradation. Through the regulation of RBBP8/CtIP protein turnover, may play a role in DNA damage response, favoring DNA double-strand repair through error-prone non-homologous end joining (NHEJ) over error-free, RBBP8-mediated homologous recombination (HR). This chain is Fizzy-related protein homolog, found in Homo sapiens (Human).